We begin with the raw amino-acid sequence, 303 residues long: N-acetyl-D-glucosamine kinase (303 aa).

Residues glycine 4 to lysine 11 and glycine 133 to phenylalanine 140 each bind ATP. Zn(2+)-binding residues include histidine 157, cysteine 177, cysteine 179, and cysteine 184.

It belongs to the ROK (NagC/XylR) family. NagK subfamily.

It catalyses the reaction N-acetyl-D-glucosamine + ATP = N-acetyl-D-glucosamine 6-phosphate + ADP + H(+). It functions in the pathway cell wall biogenesis; peptidoglycan recycling. In terms of biological role, catalyzes the phosphorylation of N-acetyl-D-glucosamine (GlcNAc) derived from cell-wall degradation, yielding GlcNAc-6-P. In Escherichia coli O6:H1 (strain CFT073 / ATCC 700928 / UPEC), this protein is N-acetyl-D-glucosamine kinase.